The sequence spans 441 residues: 4-hydroxy-3-methylbut-2-en-1-yl diphosphate synthase (flavodoxin) (441 aa).

[4Fe-4S] cluster-binding residues include Cys320, Cys323, Cys366, and Glu373.

It belongs to the IspG family. Requires [4Fe-4S] cluster as cofactor.

It carries out the reaction (2E)-4-hydroxy-3-methylbut-2-enyl diphosphate + oxidized [flavodoxin] + H2O + 2 H(+) = 2-C-methyl-D-erythritol 2,4-cyclic diphosphate + reduced [flavodoxin]. Its pathway is isoprenoid biosynthesis; isopentenyl diphosphate biosynthesis via DXP pathway; isopentenyl diphosphate from 1-deoxy-D-xylulose 5-phosphate: step 5/6. Its function is as follows. Converts 2C-methyl-D-erythritol 2,4-cyclodiphosphate (ME-2,4cPP) into 1-hydroxy-2-methyl-2-(E)-butenyl 4-diphosphate. The sequence is that of 4-hydroxy-3-methylbut-2-en-1-yl diphosphate synthase (flavodoxin) from Rhodopseudomonas palustris (strain ATCC BAA-98 / CGA009).